Here is a 268-residue protein sequence, read N- to C-terminus: Ubiquinone biosynthesis protein COQ4 homolog, mitochondrial (268 aa).

Residues histidine 171, aspartate 172, histidine 175, and glutamate 187 each coordinate Zn(2+).

Belongs to the COQ4 family. In terms of assembly, component of a multi-subunit COQ enzyme complex. Zn(2+) is required as a cofactor.

Its subcellular location is the mitochondrion inner membrane. The enzyme catalyses a 4-hydroxy-3-methoxy-5-(all-trans-polyprenyl)benzoate + H(+) = a 2-methoxy-6-(all-trans-polyprenyl)phenol + CO2. Its pathway is cofactor biosynthesis; ubiquinone biosynthesis. Its function is as follows. Lyase that catalyzes the C1-decarboxylation of 4-hydroxy-3-methoxy-5-(all-trans-polyprenyl)benzoic acid into 2-methoxy-6-(all-trans-polyprenyl)phenol during ubiquinone biosynthesis. The protein is Ubiquinone biosynthesis protein COQ4 homolog, mitochondrial of Drosophila sechellia (Fruit fly).